The sequence spans 570 residues: Urease subunit alpha (570 aa).

A Urease domain is found at 131–570; it reads GGFDAHIHFI…LPMAQRYFLF (440 aa). 3 residues coordinate Ni(2+): His-136, His-138, and Lys-219. An N6-carboxylysine modification is found at Lys-219. His-221 lines the substrate pocket. Ni(2+)-binding residues include His-248 and His-274. The Proton donor role is filled by His-322. Asp-362 is a binding site for Ni(2+).

Belongs to the metallo-dependent hydrolases superfamily. Urease alpha subunit family. Heterotrimer of UreA (gamma), UreB (beta) and UreC (alpha) subunits. Three heterotrimers associate to form the active enzyme. Ni cation serves as cofactor. Post-translationally, carboxylation allows a single lysine to coordinate two nickel ions.

It localises to the cytoplasm. It catalyses the reaction urea + 2 H2O + H(+) = hydrogencarbonate + 2 NH4(+). Its pathway is nitrogen metabolism; urea degradation; CO(2) and NH(3) from urea (urease route): step 1/1. This Mesorhizobium japonicum (strain LMG 29417 / CECT 9101 / MAFF 303099) (Mesorhizobium loti (strain MAFF 303099)) protein is Urease subunit alpha.